The chain runs to 443 residues: MSQLTPREIVHELDKHIIGQDAAKRSVAIALRNRWRRQQVQDPLRQEITPKNILMIGPTGVGKTEIARRLAKLADAPFIKVEATKFTEVGYVGRDVDSIIRDLVEAAVKQSRERETQKMRARAEDHAEERILDVLLPVARETGLQMDSIEAESATRQKFRKKLREGELNDKEIEIELATPHTHMEIFAPPGMEELTTQIQGMFQNLGAERKRMRKLKIREAMKLLIDEEASKLVNDEELKLRAVQNVEQNGIVFLDEIDKITSRSETSGADVSRQGVQRDLLPLVEGTTISTKYGMIKTDHILFIASGAFHLAKPSDLIPELQGRFPIRVELTSLSAGDFVQILTNTDACLKRQYEALLETEGVRLEFTPDAVKRLAEIAFAVNEKTENIGARRLYTAMEKLLEDVSFDAEKHHGDAVVIDAAYVDKRLGDLAQSEDLARYVL.

ATP is bound by residues isoleucine 18, 60–65 (GVGKTE), aspartate 256, glutamate 321, and arginine 393.

It belongs to the ClpX chaperone family. HslU subfamily. As to quaternary structure, a double ring-shaped homohexamer of HslV is capped on each side by a ring-shaped HslU homohexamer. The assembly of the HslU/HslV complex is dependent on binding of ATP.

The protein resides in the cytoplasm. ATPase subunit of a proteasome-like degradation complex; this subunit has chaperone activity. The binding of ATP and its subsequent hydrolysis by HslU are essential for unfolding of protein substrates subsequently hydrolyzed by HslV. HslU recognizes the N-terminal part of its protein substrates and unfolds these before they are guided to HslV for hydrolysis. This Nitrosospira multiformis (strain ATCC 25196 / NCIMB 11849 / C 71) protein is ATP-dependent protease ATPase subunit HslU.